The primary structure comprises 408 residues: MLTKQTTGQAWKQIKGSITDVKGFTTAGAHCGLKRKRLDIGAIFCDVPANAAGVFTLNQIQAAPLKVTKESLAHSNGKLQAVLVNSGNANACTGASGLVDAYEMRALAAAKFAVPEEMVAVTSTGVIGEKMPMEKVRSGIEDLVLSKESTPFAEAILTTDTGTKEVCVEVVIDQKTVRIAGVAKGSGMIHPNMATMLGFITTDANIETAALKRALAKATDETFNRITVDGDTSTNDMVLVLASGLADNQPLDETHPDWANFYGALSACAESLAKKIAKDGEGATKLIEVQVAGAVSDEEAGKVAKAIVGSDLVKTAAYGKDGNWGRIICAIGYSGCTLDPDTIDIAIGPYETLVQSEPVVVDDAAISKYMEAETIVIKADLHQGQGVGKAWGCDLTYDYVRINAGYRT.

Residues Thr158, Lys184, Thr195, Glu281, Asn403, and Thr408 each contribute to the substrate site. The active-site Nucleophile is Thr195.

This sequence belongs to the ArgJ family. In terms of assembly, heterotetramer of two alpha and two beta chains.

The protein resides in the cytoplasm. It carries out the reaction N(2)-acetyl-L-ornithine + L-glutamate = N-acetyl-L-glutamate + L-ornithine. It catalyses the reaction L-glutamate + acetyl-CoA = N-acetyl-L-glutamate + CoA + H(+). Its pathway is amino-acid biosynthesis; L-arginine biosynthesis; L-ornithine and N-acetyl-L-glutamate from L-glutamate and N(2)-acetyl-L-ornithine (cyclic): step 1/1. It participates in amino-acid biosynthesis; L-arginine biosynthesis; N(2)-acetyl-L-ornithine from L-glutamate: step 1/4. Its function is as follows. Catalyzes two activities which are involved in the cyclic version of arginine biosynthesis: the synthesis of N-acetylglutamate from glutamate and acetyl-CoA as the acetyl donor, and of ornithine by transacetylation between N(2)-acetylornithine and glutamate. This chain is Arginine biosynthesis bifunctional protein ArgJ, found in Shouchella clausii (strain KSM-K16) (Alkalihalobacillus clausii).